We begin with the raw amino-acid sequence, 504 residues long: Probable alpha-L-arabinofuranosidase C (504 aa).

Residues Asn-152, Asn-181, Asn-269, and Asn-467 are each glycosylated (N-linked (GlcNAc...) asparagine).

It belongs to the glycosyl hydrolase 51 family.

The protein resides in the secreted. The catalysed reaction is Hydrolysis of terminal non-reducing alpha-L-arabinofuranoside residues in alpha-L-arabinosides.. It functions in the pathway glycan metabolism; L-arabinan degradation. Alpha-L-arabinofuranosidase involved in the degradation of arabinoxylan, a major component of plant hemicellulose. Acts only on small linear 1,5-alpha-linked L-arabinofuranosyl oligosaccharides. This is Probable alpha-L-arabinofuranosidase C (abfC) from Aspergillus terreus (strain NIH 2624 / FGSC A1156).